The primary structure comprises 286 residues: Probable endonuclease 4 (286 aa).

9 residues coordinate Zn(2+): histidine 71, histidine 111, glutamate 147, aspartate 181, histidine 184, histidine 218, aspartate 231, histidine 233, and glutamate 263.

The protein belongs to the AP endonuclease 2 family. The cofactor is Zn(2+).

The enzyme catalyses Endonucleolytic cleavage to 5'-phosphooligonucleotide end-products.. Endonuclease IV plays a role in DNA repair. It cleaves phosphodiester bonds at apurinic or apyrimidinic (AP) sites, generating a 3'-hydroxyl group and a 5'-terminal sugar phosphate. The polypeptide is Probable endonuclease 4 (Vibrio cholerae serotype O1 (strain ATCC 39541 / Classical Ogawa 395 / O395)).